Here is a 447-residue protein sequence, read N- to C-terminus: Tubulin beta chain (447 aa).

Gln-11, Glu-69, Ser-138, Gly-142, Thr-143, Gly-144, Asn-204, and Asn-226 together coordinate GTP. Glu-69 provides a ligand contact to Mg(2+). A disordered region spans residues 427–447 (DAGIDEEEEEYEEELPLEGEE). Residues 429–447 (GIDEEEEEYEEELPLEGEE) are compositionally biased toward acidic residues.

The protein belongs to the tubulin family. In terms of assembly, dimer of alpha and beta chains. A typical microtubule is a hollow water-filled tube with an outer diameter of 25 nm and an inner diameter of 15 nM. Alpha-beta heterodimers associate head-to-tail to form protofilaments running lengthwise along the microtubule wall with the beta-tubulin subunit facing the microtubule plus end conferring a structural polarity. Microtubules usually have 13 protofilaments but different protofilament numbers can be found in some organisms and specialized cells. It depends on Mg(2+) as a cofactor.

It is found in the cytoplasm. Its subcellular location is the cytoskeleton. In terms of biological role, tubulin is the major constituent of microtubules, a cylinder consisting of laterally associated linear protofilaments composed of alpha- and beta-tubulin heterodimers. Microtubules grow by the addition of GTP-tubulin dimers to the microtubule end, where a stabilizing cap forms. Below the cap, tubulin dimers are in GDP-bound state, owing to GTPase activity of alpha-tubulin. The chain is Tubulin beta chain (TUB2) from Hapsidospora chrysogena (Acremonium chrysogenum).